A 236-amino-acid chain; its full sequence is Small ribosomal subunit protein uS2c (236 aa).

Belongs to the universal ribosomal protein uS2 family.

It localises to the plastid. It is found in the chloroplast. The polypeptide is Small ribosomal subunit protein uS2c (rps2) (Lemna minor (Common duckweed)).